A 235-amino-acid chain; its full sequence is Coiled-coil domain-containing protein 71L (235 aa).

The segment covering 1-13 (MRRSMKRRRRRRP) has biased composition (basic residues). Residues 1-30 (MRRSMKRRRRRRPVAPATAARGGDFRAEDG) form a disordered region. Phosphoserine is present on residues Ser-52 and Ser-89. The disordered stretch occupies residues 109–167 (PDPPGPPTARGQARRPVPRAAARRRRRGARAAAARRRKPRPPPPPPPPPEESCPAKPVA). The segment covering 120 to 148 (QARRPVPRAAARRRRRGARAAAARRRKPR) has biased composition (basic residues). Residues 149 to 159 (PPPPPPPPPEE) show a composition bias toward pro residues. At Thr-185 the chain carries Phosphothreonine. Ser-198 carries the phosphoserine modification.

This is Coiled-coil domain-containing protein 71L (CCDC71L) from Homo sapiens (Human).